The following is a 118-amino-acid chain: Diacylglycerol kinase (118 aa).

Glu-28 provides a ligand contact to a divalent metal cation. 2 consecutive transmembrane segments (helical) span residues 29–49 (TAFRHECFLACILIPLTFFLG) and 55–75 (IILMISSVLLVMALELLNSAV). Glu-69 acts as the Proton acceptor in catalysis. Residue Glu-76 coordinates a divalent metal cation. The chain crosses the membrane as a helical span at residues 98-118 (SASVFIALCIVGIVWGGILFF).

Belongs to the bacterial diacylglycerol kinase family. Mg(2+) serves as cofactor.

The protein resides in the cell inner membrane. It carries out the reaction a 1,2-diacyl-sn-glycerol + ATP = a 1,2-diacyl-sn-glycero-3-phosphate + ADP + H(+). Its function is as follows. Catalyzes the ATP-dependent phosphorylation of sn-l,2-diacylglycerol (DAG) to phosphatidic acid. Involved in the recycling of diacylglycerol produced as a by-product during membrane-derived oligosaccharide (MDO) biosynthesis. This Haemophilus influenzae (strain ATCC 51907 / DSM 11121 / KW20 / Rd) protein is Diacylglycerol kinase (dgkA).